We begin with the raw amino-acid sequence, 203 residues long: MEKMAMKMLVIFVLGMNHWTCTGFPVYDYDPASLKEALSASVAKVNSQSLSPYLFRAFRSSVKRVNALDEDSLTMDLEFRIQETTCRRESEADPATCDFQRGYHVPVAVCRSTVRMSAEQVQNVWVRCHWSSSSGSSSSEEMFFGDILGSSTSRNSYLLGLTPDRSRGEPLYEPSREMRRNFPLGNRRYSNPWPRARVNPGFE.

An N-terminal signal peptide occupies residues 1–23 (MEKMAMKMLVIFVLGMNHWTCTG). Intrachain disulfides connect cysteine 86–cysteine 97 and cysteine 110–cysteine 128. The residue at position 90 (serine 90) is a Phosphoserine. Phosphoserine occurs at positions 138, 139, 166, and 175.

This sequence belongs to the SPP2 family. In terms of processing, multiply phosphorylated at serine residues in Ser-X-Glu/Ser(P) sequences, a recognition motif for phosphorylation by secretory pathway protein kinase. Phosphorylation sites are present in the extracellular medium. In liver and bone but not in heart, lung, kidney, or spleen.

The protein resides in the secreted. Its function is as follows. Could coordinate an aspect of bone turnover. This chain is Secreted phosphoprotein 24 (SPP2), found in Bos taurus (Bovine).